The following is a 291-amino-acid chain: Formamidopyrimidine-DNA glycosylase (291 aa).

Proline 2 (schiff-base intermediate with DNA) is an active-site residue. The Proton donor role is filled by glutamate 3. The active-site Proton donor; for beta-elimination activity is lysine 58. DNA contacts are provided by histidine 100, arginine 123, and lysine 166. The FPG-type zinc finger occupies 257 to 291 (SVYGREGKECLHCGIPIVRILQSGRSSFYCSQCQK). Arginine 281 functions as the Proton donor; for delta-elimination activity in the catalytic mechanism.

The protein belongs to the FPG family. In terms of assembly, monomer. It depends on Zn(2+) as a cofactor.

It catalyses the reaction Hydrolysis of DNA containing ring-opened 7-methylguanine residues, releasing 2,6-diamino-4-hydroxy-5-(N-methyl)formamidopyrimidine.. The enzyme catalyses 2'-deoxyribonucleotide-(2'-deoxyribose 5'-phosphate)-2'-deoxyribonucleotide-DNA = a 3'-end 2'-deoxyribonucleotide-(2,3-dehydro-2,3-deoxyribose 5'-phosphate)-DNA + a 5'-end 5'-phospho-2'-deoxyribonucleoside-DNA + H(+). Its function is as follows. Involved in base excision repair of DNA damaged by oxidation or by mutagenic agents. Acts as a DNA glycosylase that recognizes and removes damaged bases. Has a preference for oxidized purines, such as 7,8-dihydro-8-oxoguanine (8-oxoG). Has AP (apurinic/apyrimidinic) lyase activity and introduces nicks in the DNA strand. Cleaves the DNA backbone by beta-delta elimination to generate a single-strand break at the site of the removed base with both 3'- and 5'-phosphates. The chain is Formamidopyrimidine-DNA glycosylase from Bartonella henselae (strain ATCC 49882 / DSM 28221 / CCUG 30454 / Houston 1) (Rochalimaea henselae).